An 830-amino-acid chain; its full sequence is MKDPSREIIQVNIEEELKSSYLDYSMSVIVGRALPDVRDGLKPVHRRILFAMYILNNDWNKAYKKSARIVGDVIGKYHPHGDSAVYDAIVRMAQKFSLRYMLIDGQGNFGSVDGDSAAAMRYTEVRMSKIAHELLNDLEKNTVEFLPNYDGTEYIPEILPAKIPNLLINGSSGIAVGMATNIPPHNLNEVINGCLAYIDNNDITLEELIKHIPGPDFPTAAIINGKSGIEEAYRTGKGKIYIRAQNQIEKNKKNKKESIVFNEIPYQVNKSRLIEKIAELVKEKRIDGITALRDESDKDGMRIVIEIKREAIAEVILNQLYSLTQLQISFGINMVALCQGQPKTLSLKEILKNFLSHRQEIIIRRSLFELNKVRNRIHILEGLNMALININAIIEIIKNSVNSIDAKKIIIQKNWKSEKINYLAKKHEYYFSEKQAQAILDLRLHKITNLEQEKIIMEHNDLIKKTKELKEILENPKKMFEVIKSELLSIQNNFSDKRRTKITENHSDINMEDLINQEDVVVTLSHSGYVKYQPLSDYNAQRRGGKGKSAAKIKEEDFIESLVIANTHDTILCFSSRGILYWMKVYQLPESSRHARGRPIVNLLPLSPKERITAILPVHKYQDNLNIFMTTAHGIVKKSSLSQFKKPRFAGIIAINLHANDELIGVALTDGNNNIMLFTQNGKVVQFLENSVRTMGRTASGVKGIKIKKNDKVVSLIVPKNKGSILIATKNGYGKRTKISDFPIKSRATQGVISIKITKKNGKIIGAIQVIEKDQIMMITDAGTLVRIRVSEVGVLKRNTQGVILIRTSKNEKVVALQKIVDPMIEKIDL.

Positions 34-514 (LPDVRDGLKP…NHSDINMEDL (481 aa)) constitute a Topo IIA-type catalytic domain. Catalysis depends on Tyr122, which acts as the O-(5'-phospho-DNA)-tyrosine intermediate. The GyrA-box signature appears at 541–547 (QRRGGKG).

The protein belongs to the type II topoisomerase GyrA/ParC subunit family. In terms of assembly, heterotetramer, composed of two GyrA and two GyrB chains. In the heterotetramer, GyrA contains the active site tyrosine that forms a transient covalent intermediate with DNA, while GyrB binds cofactors and catalyzes ATP hydrolysis.

The protein localises to the cytoplasm. It catalyses the reaction ATP-dependent breakage, passage and rejoining of double-stranded DNA.. A type II topoisomerase that negatively supercoils closed circular double-stranded (ds) DNA in an ATP-dependent manner to modulate DNA topology and maintain chromosomes in an underwound state. Negative supercoiling favors strand separation, and DNA replication, transcription, recombination and repair, all of which involve strand separation. Also able to catalyze the interconversion of other topological isomers of dsDNA rings, including catenanes and knotted rings. Type II topoisomerases break and join 2 DNA strands simultaneously in an ATP-dependent manner. This Buchnera aphidicola subsp. Acyrthosiphon pisum (strain APS) (Acyrthosiphon pisum symbiotic bacterium) protein is DNA gyrase subunit A.